The primary structure comprises 951 residues: Bifunctional glutamine synthetase adenylyltransferase/adenylyl-removing enzyme (951 aa).

The tract at residues 1–440 (MLPLPSELQI…VFDDLIGDET (440 aa)) is adenylyl removase. The adenylyl transferase stretch occupies residues 449–951 (HGLYKSLWQD…WLAANDANVS (503 aa)).

It belongs to the GlnE family. The cofactor is Mg(2+).

The enzyme catalyses [glutamine synthetase]-O(4)-(5'-adenylyl)-L-tyrosine + phosphate = [glutamine synthetase]-L-tyrosine + ADP. It catalyses the reaction [glutamine synthetase]-L-tyrosine + ATP = [glutamine synthetase]-O(4)-(5'-adenylyl)-L-tyrosine + diphosphate. Its function is as follows. Involved in the regulation of glutamine synthetase GlnA, a key enzyme in the process to assimilate ammonia. When cellular nitrogen levels are high, the C-terminal adenylyl transferase (AT) inactivates GlnA by covalent transfer of an adenylyl group from ATP to specific tyrosine residue of GlnA, thus reducing its activity. Conversely, when nitrogen levels are low, the N-terminal adenylyl removase (AR) activates GlnA by removing the adenylyl group by phosphorolysis, increasing its activity. The regulatory region of GlnE binds the signal transduction protein PII (GlnB) which indicates the nitrogen status of the cell. The polypeptide is Bifunctional glutamine synthetase adenylyltransferase/adenylyl-removing enzyme (Yersinia pestis bv. Antiqua (strain Antiqua)).